The primary structure comprises 148 residues: Nucleoside diphosphate kinase (148 aa).

ATP-binding residues include lysine 10, phenylalanine 58, arginine 86, threonine 92, arginine 103, and asparagine 113. Histidine 116 (pros-phosphohistidine intermediate) is an active-site residue.

Belongs to the NDK family. Mg(2+) is required as a cofactor.

The protein resides in the cytoplasm. The enzyme catalyses a 2'-deoxyribonucleoside 5'-diphosphate + ATP = a 2'-deoxyribonucleoside 5'-triphosphate + ADP. The catalysed reaction is a ribonucleoside 5'-diphosphate + ATP = a ribonucleoside 5'-triphosphate + ADP. In terms of biological role, major role in the synthesis of nucleoside triphosphates other than ATP. The ATP gamma phosphate is transferred to the NDP beta phosphate via a ping-pong mechanism, using a phosphorylated active-site intermediate. In Thermoplasma acidophilum (strain ATCC 25905 / DSM 1728 / JCM 9062 / NBRC 15155 / AMRC-C165), this protein is Nucleoside diphosphate kinase.